The sequence spans 579 residues: Membrane frizzled-related protein (579 aa).

Over 1-69 the chain is Cytoplasmic; the sequence is MKDFSDVILC…RPDCRFSWLC (69 aa). The helical; Signal-anchor for type II membrane protein transmembrane segment at 70–90 threads the bilayer; it reads VLLLSSLLLLLLGLLVAIILA. The Extracellular segment spans residues 91–579; sequence QLQAAPPSGA…AADLEACAQP (489 aa). Positions 100–143 are disordered; that stretch reads ASHSPLPAGGLTTTTTTPTITTSQAAGTPKGQQESGVSPSPQST. Residues 111 to 121 are compositionally biased toward low complexity; that stretch reads TTTTTTPTITT. Residues 122–143 are compositionally biased toward polar residues; sequence SQAAGTPKGQQESGVSPSPQST. 2 disulfides stabilise this stretch: cysteine 144–cysteine 170 and cysteine 197–cysteine 216. In terms of domain architecture, CUB 1 spans 144-253; sequence CGGLLSGPRG…FGFHAWYQAM (110 aa). Asparagine 227 carries an N-linked (GlcNAc...) asparagine glycan. An LDL-receptor class A 1 domain is found at 259-295; it reads SCAHDEFRCDQLICLLPDSVCDGFANCADGSDETNCS. 5 disulfide bridges follow: cysteine 260–cysteine 272, cysteine 267–cysteine 285, cysteine 279–cysteine 294, cysteine 301–cysteine 327, and cysteine 354–cysteine 377. Residues 301–414 form the CUB 2 domain; that stretch reads CGGNLTGLQG…GGFSATYLAF (114 aa). Residue asparagine 415 is glycosylated (N-linked (GlcNAc...) asparagine). One can recognise an LDL-receptor class A 2 domain in the interval 420–455; sequence PCGPSELSCQAGGCKGVQWMCDMWRDCTDGSDDNCS. Disulfide bonds link cysteine 421/cysteine 433, cysteine 428/cysteine 446, cysteine 440/cysteine 454, cysteine 466/cysteine 528, cysteine 474/cysteine 521, cysteine 512/cysteine 549, cysteine 538/cysteine 576, and cysteine 542/cysteine 564. Positions 461 to 579 constitute an FZ domain; the sequence is PPELACEPVQ…AADLEACAQP (119 aa).

In terms of assembly, interacts with C1QTNF5. As to expression, specifically expressed in brain. Strongly expressed in medulla oblongata and to a lower extent in hippocampus and corpus callosum. Expressed in keratinocytes.

Its subcellular location is the apical cell membrane. Functionally, may play a role in eye development. In Homo sapiens (Human), this protein is Membrane frizzled-related protein (MFRP).